Reading from the N-terminus, the 270-residue chain is UPF0354 protein BCAH187_A4826 (270 aa).

It belongs to the UPF0354 family.

The sequence is that of UPF0354 protein BCAH187_A4826 from Bacillus cereus (strain AH187).